The chain runs to 289 residues: MYG1 protein CT_386 (289 aa).

Belongs to the MYG1 family.

In Chlamydia trachomatis serovar D (strain ATCC VR-885 / DSM 19411 / UW-3/Cx), this protein is MYG1 protein CT_386.